Reading from the N-terminus, the 85-residue chain is Large ribosomal subunit protein bL27 (85 aa).

The interval 1–20 (MATKKAGGSTKNGRDSNPKM) is disordered.

This sequence belongs to the bacterial ribosomal protein bL27 family.

This chain is Large ribosomal subunit protein bL27, found in Acinetobacter baumannii (strain AB307-0294).